We begin with the raw amino-acid sequence, 985 residues long: P3N-PIPO polyprotein (985 aa).

Residues 144–287 (TFRDGHMNKF…MATVTHMEQY (144 aa)) form the Peptidase S30 domain. Residues histidine 195, aspartate 204, and serine 238 each act as for P1 proteinase activity in the active site. An Involved in interaction with stylet and aphid transmission motif is present at residues 337 to 340 (KLTC). Residues 595 to 597 (PTK) carry the Involved in virions binding and aphid transmission motif. The Peptidase C6 domain occupies 621–743 (LYIALDGYCY…ESEIKHYRVG (123 aa)). Active-site for helper component proteinase activity residues include cysteine 629 and histidine 702.

This sequence belongs to the potyviridae P3N-PIPO polyprotein family. In terms of assembly, interacts (via PIPO domain) with host PCaP1 protein; this interaction may help to anchor the movement complex to the plasma membrane from which the complex could move to the plasmodesmata. Post-translationally, potyviral RNA is expressed as two polyproteins which undergo post-translational proteolytic processing. Genome polyprotein is processed by NIa-pro, P1 and HC-pro proteinases resulting in the production of at least ten individual proteins. P3N-PIPO is cleaved by P1 and HC-pro proteinases resulting in the production of three individual proteins. The P1 proteinase and the HC-pro cleave only their respective C-termini autocatalytically.

It is found in the host cell junction. Its subcellular location is the host plasmodesma. The enzyme catalyses Hydrolyzes a Gly-|-Gly bond at its own C-terminus, commonly in the sequence -Tyr-Xaa-Val-Gly-|-Gly, in the processing of the potyviral polyprotein.. Required for aphid transmission and also has proteolytic activity. Only cleaves a Gly-Gly dipeptide at its own C-terminus. Interacts with virions and aphid stylets. Acts as a suppressor of RNA-mediated gene silencing, also known as post-transcriptional gene silencing (PTGS), a mechanism of plant viral defense that limits the accumulation of viral RNAs. May have RNA-binding activity. Its function is as follows. Allows efficient cell to cell propagation, by bypassing the host cell wall barrier. Transports viral genome to neighboring plant cells directly through plasmosdesmata, without any budding. This chain is P3N-PIPO polyprotein, found in Pepper mottle virus (isolate California) (PeMV).